We begin with the raw amino-acid sequence, 215 residues long: Thymidylate kinase (215 aa).

An ATP-binding site is contributed by 13–20 (GLEGAGKS).

Belongs to the thymidylate kinase family.

The catalysed reaction is dTMP + ATP = dTDP + ADP. In terms of biological role, phosphorylation of dTMP to form dTDP in both de novo and salvage pathways of dTTP synthesis. In Shewanella frigidimarina (strain NCIMB 400), this protein is Thymidylate kinase.